The chain runs to 447 residues: GTPase Der (447 aa).

2 consecutive EngA-type G domains span residues 3–167 (PVIA…VQER) and 181–354 (VKIA…AAAM). Residues 9-16 (GRPNVGKS), 56-60 (DTGGF), 119-122 (NKAE), 187-194 (GRPNVGKS), 234-238 (DTAGL), and 299-302 (NKWD) each bind GTP. A KH-like domain is found at 355 to 439 (VKLPTPQLTR…PLRIEFRTNK (85 aa)).

The protein belongs to the TRAFAC class TrmE-Era-EngA-EngB-Septin-like GTPase superfamily. EngA (Der) GTPase family. As to quaternary structure, associates with the 50S ribosomal subunit.

GTPase that plays an essential role in the late steps of ribosome biogenesis. The chain is GTPase Der from Cupriavidus taiwanensis (strain DSM 17343 / BCRC 17206 / CCUG 44338 / CIP 107171 / LMG 19424 / R1) (Ralstonia taiwanensis (strain LMG 19424)).